Consider the following 192-residue polypeptide: Signal peptidase complex catalytic subunit SEC11C (192 aa).

At 1-28 (MVRAGAVGAHLPASGLDIFGDLKKMNKR) the chain is on the cytoplasmic side. Residues 29-48 (QLYYQVLNFAMIVSSALMIW) traverse the membrane as a helical; Signal-anchor for type II membrane protein segment. Topologically, residues 49–192 (KGLIVLTGSE…GAYVLLKRES (144 aa)) are lumenal. Catalysis depends on charge relay system residues S68, H108, and D134. The segment at 177–188 (ALLAVMGAYVLL) is C-terminal short (CTS) helix.

The protein belongs to the peptidase S26B family. In terms of assembly, component of the signal peptidase complex paralog C (SPC-C) composed of a catalytic subunit SEC11C and three accessory subunits SPCS1, SPCS2 and SPCS3. Within the complex, interacts with SPCS2 and SPCS3. The complex induces a local thinning of the ER membrane which is used to measure the length of the signal peptide (SP) h-region of protein substrates. This ensures the selectivity of the complex towards h-regions shorter than 18-20 amino acids. Post-translationally, may undergo processing at the N-terminus.

Its subcellular location is the endoplasmic reticulum membrane. The catalysed reaction is Cleavage of hydrophobic, N-terminal signal or leader sequences from secreted and periplasmic proteins.. In terms of biological role, catalytic component of the signal peptidase complex (SPC) which catalyzes the cleavage of N-terminal signal sequences from nascent proteins as they are translocated into the lumen of the endoplasmic reticulum. Specifically cleaves N-terminal signal peptides that contain a hydrophobic alpha-helix (h-region) shorter than 18-20 amino acids. The protein is Signal peptidase complex catalytic subunit SEC11C (SEC11C) of Homo sapiens (Human).